Consider the following 290-residue polypeptide: 33 kDa chaperonin (290 aa).

Intrachain disulfides connect Cys-235–Cys-237 and Cys-268–Cys-271.

Belongs to the HSP33 family. Post-translationally, under oxidizing conditions two disulfide bonds are formed involving the reactive cysteines. Under reducing conditions zinc is bound to the reactive cysteines and the protein is inactive.

The protein resides in the cytoplasm. In terms of biological role, redox regulated molecular chaperone. Protects both thermally unfolding and oxidatively damaged proteins from irreversible aggregation. Plays an important role in the bacterial defense system toward oxidative stress. In Streptococcus pneumoniae (strain JJA), this protein is 33 kDa chaperonin.